The following is a 148-amino-acid chain: Putative fusion protein (148 aa).

The disordered stretch occupies residues 1 to 34 (MDRALSTFPGDDDETNERNINHREKTSGEHGHYE). The segment covering 16–34 (NERNINHREKTSGEHGHYE) has biased composition (basic and acidic residues).

This sequence belongs to the poxviruses fusion protein family. As to quaternary structure, homotrimer, covalently linked.

The protein localises to the virion membrane. This chain is Putative fusion protein, found in Sheeppox virus (strain KS-1) (SPPV).